Consider the following 389-residue polypeptide: uncharacterized protein (389 aa).

The segment covering 1–12 (MVHATSQSASTE) has biased composition (polar residues). Disordered stretches follow at residues 1-49 (MVHA…DEDL) and 86-111 (HKSM…ANRA). Residues 40–49 (ESGDEYDEDL) show a composition bias toward acidic residues. Basic residues predominate over residues 93-110 (RGKKKRGKTAKKAKKANR).

This is an uncharacterized protein from Caenorhabditis elegans.